Here is a 156-residue protein sequence, read N- to C-terminus: Oleosin Zm-I (156 aa).

The tract at residues 1–30 is disordered; sequence MADHHRGATGGGGGYGDLQRGGGMHGEAQQ. Ala-2 carries the N-acetylalanine modification. Residues 2-42 form a polar region; sequence ADHHRGATGGGGGYGDLQRGGGMHGEAQQQQKQGAMMTALK. Gly residues predominate over residues 8–25; the sequence is ATGGGGGYGDLQRGGGMH. Positions 43 to 114 are hydrophobic; the sequence is AATAATFGGS…AALSVFSWMY (72 aa). The next 2 membrane-spanning stretches (helical) occupy residues 51–71 and 95–115; these read GSML…LTVA and GFVT…WMYK.

This sequence belongs to the oleosin family. Post-translationally, the N-terminus is blocked.

Its subcellular location is the lipid droplet. The protein localises to the membrane. Functionally, may have a structural role to stabilize the lipid body during desiccation of the seed by preventing coalescence of the oil. Probably interacts with both lipid and phospholipid moieties of lipid bodies. May also provide recognition signals for specific lipase anchorage in lipolysis during seedling growth. In Zea mays (Maize), this protein is Oleosin Zm-I (OLE16).